Here is a 243-residue protein sequence, read N- to C-terminus: UPF0246 protein spyM18_2163 (243 aa).

The protein belongs to the UPF0246 family.

The polypeptide is UPF0246 protein spyM18_2163 (Streptococcus pyogenes serotype M18 (strain MGAS8232)).